The chain runs to 614 residues: MDLFNYSRRESSEVNIGATPLGGNNPIRIQSMTNTVTMDTEACVEQAKRIIDAGGEYVRLTTQGVREAENLKNINIGLRSQGYDTPLVADVHFNPKVADVAAQYAEKVRINPGNYVDPGRTFQKLEYTDEEYAQEIEKIRARFIPFLNICKENHTAIRIGVNHGSLSDRIMSHYGDTPEGMVESCMEFLRICVAEHFNDVVISIKASNTVVMVRTVRLLVKEMEKEGMAFPLHLGVTEAGDGEDGRIKSALGIGALLADGLGDTIRVSLSEAPENEIPVARKLVDYILTREGHPFIPGKEAPQFNYLSPGRRKTKAVRNIGGDNLPVVIAERLEGSFETNPQFKPDYIYCGGSVPQSRDNNIAYLVDANAWNPEDKNVYPAFNYQQMIELHHTVSDLKFLFLPYMAMNDEVIAALKLHPEVVIIAQSNHPNRLGEYRAMTHELMNEGLENPVVFFQYYQETKAEDLQIKAAADMGALIFDGLCDGIFLYNQGPLSHIVVDTTAFGILQAGRIRTSKTEYISCPGCGRTLYDLESTIARIKTATSHLKGLKIGIMGCIVNGPGEMADADYGYVGAGRGKISLYKKKECIEKNIPEDQAVEKLIELIKANGDYTEK.

Positions 522, 525, 556, and 563 each coordinate [4Fe-4S] cluster.

Belongs to the IspG family. [4Fe-4S] cluster serves as cofactor.

It catalyses the reaction (2E)-4-hydroxy-3-methylbut-2-enyl diphosphate + oxidized [flavodoxin] + H2O + 2 H(+) = 2-C-methyl-D-erythritol 2,4-cyclic diphosphate + reduced [flavodoxin]. It participates in isoprenoid biosynthesis; isopentenyl diphosphate biosynthesis via DXP pathway; isopentenyl diphosphate from 1-deoxy-D-xylulose 5-phosphate: step 5/6. Its function is as follows. Converts 2C-methyl-D-erythritol 2,4-cyclodiphosphate (ME-2,4cPP) into 1-hydroxy-2-methyl-2-(E)-butenyl 4-diphosphate. This chain is 4-hydroxy-3-methylbut-2-en-1-yl diphosphate synthase (flavodoxin), found in Phocaeicola vulgatus (strain ATCC 8482 / DSM 1447 / JCM 5826 / CCUG 4940 / NBRC 14291 / NCTC 11154) (Bacteroides vulgatus).